We begin with the raw amino-acid sequence, 156 residues long: 6,7-dimethyl-8-ribityllumazine synthase (156 aa).

5-amino-6-(D-ribitylamino)uracil-binding positions include phenylalanine 23, 57–59 (AFE), and 81–83 (AVI). Residue 86-87 (ST) participates in (2S)-2-hydroxy-3-oxobutyl phosphate binding. Histidine 89 (proton donor) is an active-site residue. Position 114 (phenylalanine 114) interacts with 5-amino-6-(D-ribitylamino)uracil. (2S)-2-hydroxy-3-oxobutyl phosphate is bound at residue arginine 128.

This sequence belongs to the DMRL synthase family.

It catalyses the reaction (2S)-2-hydroxy-3-oxobutyl phosphate + 5-amino-6-(D-ribitylamino)uracil = 6,7-dimethyl-8-(1-D-ribityl)lumazine + phosphate + 2 H2O + H(+). It functions in the pathway cofactor biosynthesis; riboflavin biosynthesis; riboflavin from 2-hydroxy-3-oxobutyl phosphate and 5-amino-6-(D-ribitylamino)uracil: step 1/2. Catalyzes the formation of 6,7-dimethyl-8-ribityllumazine by condensation of 5-amino-6-(D-ribitylamino)uracil with 3,4-dihydroxy-2-butanone 4-phosphate. This is the penultimate step in the biosynthesis of riboflavin. In Campylobacter lari (strain RM2100 / D67 / ATCC BAA-1060), this protein is 6,7-dimethyl-8-ribityllumazine synthase.